The chain runs to 61 residues: Sodium/potassium-transporting ATPase subunit gamma (61 aa).

A helical transmembrane segment spans residues 24-44 (KGGLIFAAIAFVVGMLIIFSG).

The protein belongs to the FXYD family. In terms of assembly, regulatory subunit of the sodium/potassium-transporting ATPase which is composed of a catalytic alpha subunit, an auxiliary non-catalytic beta subunit and an additional regulatory subunit.

The protein resides in the membrane. May be involved in forming the receptor site for cardiac glycoside binding or may modulate the transport function of the sodium ATPase. This Xenopus laevis (African clawed frog) protein is Sodium/potassium-transporting ATPase subunit gamma (fxyd2).